Here is a 449-residue protein sequence, read N- to C-terminus: Kynurenine 3-monooxygenase (449 aa).

The protein belongs to the aromatic-ring hydroxylase family. KMO subfamily. FAD serves as cofactor.

The catalysed reaction is L-kynurenine + NADPH + O2 + H(+) = 3-hydroxy-L-kynurenine + NADP(+) + H2O. Its pathway is cofactor biosynthesis; NAD(+) biosynthesis; quinolinate from L-kynurenine: step 1/3. Catalyzes the hydroxylation of L-kynurenine (L-Kyn) to form 3-hydroxy-L-kynurenine (L-3OHKyn). Required for synthesis of quinolinic acid. The protein is Kynurenine 3-monooxygenase of Legionella pneumophila (strain Corby).